The chain runs to 207 residues: ATP-dependent Clp protease proteolytic subunit (207 aa).

Residue serine 111 is the Nucleophile of the active site. Histidine 136 is a catalytic residue.

Belongs to the peptidase S14 family. In terms of assembly, fourteen ClpP subunits assemble into 2 heptameric rings which stack back to back to give a disk-like structure with a central cavity, resembling the structure of eukaryotic proteasomes. Component of the ClpAP and ClpXP complexes.

It is found in the cytoplasm. It catalyses the reaction Hydrolysis of proteins to small peptides in the presence of ATP and magnesium. alpha-casein is the usual test substrate. In the absence of ATP, only oligopeptides shorter than five residues are hydrolyzed (such as succinyl-Leu-Tyr-|-NHMec, and Leu-Tyr-Leu-|-Tyr-Trp, in which cleavage of the -Tyr-|-Leu- and -Tyr-|-Trp bonds also occurs).. Functionally, cleaves peptides in various proteins in a process that requires ATP hydrolysis. Has a chymotrypsin-like activity. Plays a major role in the degradation of misfolded proteins. In Escherichia coli O139:H28 (strain E24377A / ETEC), this protein is ATP-dependent Clp protease proteolytic subunit.